The sequence spans 777 residues: Lon protease (777 aa).

Residues Ile11–Ile204 enclose the Lon N-terminal domain. Gly356 to Thr363 is a binding site for ATP. The Lon proteolytic domain maps to Thr592–Lys773. Catalysis depends on residues Ser679 and Lys722.

This sequence belongs to the peptidase S16 family. In terms of assembly, homohexamer. Organized in a ring with a central cavity.

The protein localises to the cytoplasm. The enzyme catalyses Hydrolysis of proteins in presence of ATP.. ATP-dependent serine protease that mediates the selective degradation of mutant and abnormal proteins as well as certain short-lived regulatory proteins. Required for cellular homeostasis and for survival from DNA damage and developmental changes induced by stress. Degrades polypeptides processively to yield small peptide fragments that are 5 to 10 amino acids long. Binds to DNA in a double-stranded, site-specific manner. The chain is Lon protease from Buchnera aphidicola subsp. Acyrthosiphon pisum (strain APS) (Acyrthosiphon pisum symbiotic bacterium).